A 493-amino-acid chain; its full sequence is Galactose-1-phosphate uridylyltransferase (493 aa).

It belongs to the galactose-1-phosphate uridylyltransferase type 2 family.

It is found in the cytoplasm. The enzyme catalyses alpha-D-galactose 1-phosphate + UDP-alpha-D-glucose = alpha-D-glucose 1-phosphate + UDP-alpha-D-galactose. It functions in the pathway carbohydrate metabolism; galactose metabolism. This chain is Galactose-1-phosphate uridylyltransferase, found in Lactococcus lactis subsp. cremoris (strain MG1363).